We begin with the raw amino-acid sequence, 185 residues long: Ribosome-recycling factor (185 aa).

This sequence belongs to the RRF family.

The protein resides in the cytoplasm. Its function is as follows. Responsible for the release of ribosomes from messenger RNA at the termination of protein biosynthesis. May increase the efficiency of translation by recycling ribosomes from one round of translation to another. This is Ribosome-recycling factor from Xanthomonas euvesicatoria pv. vesicatoria (strain 85-10) (Xanthomonas campestris pv. vesicatoria).